Here is a 531-residue protein sequence, read N- to C-terminus: Light-independent protochlorophyllide reductase subunit B (531 aa).

Asp36 is a binding site for [4Fe-4S] cluster. Asp296 functions as the Proton donor in the catalytic mechanism. 431–432 (GM) is a substrate binding site.

Belongs to the ChlB/BchB/BchZ family. In terms of assembly, protochlorophyllide reductase is composed of three subunits; ChlL, ChlN and ChlB. Forms a heterotetramer of two ChlB and two ChlN subunits. The cofactor is [4Fe-4S] cluster.

The protein resides in the plastid. It localises to the chloroplast. The enzyme catalyses chlorophyllide a + oxidized 2[4Fe-4S]-[ferredoxin] + 2 ADP + 2 phosphate = protochlorophyllide a + reduced 2[4Fe-4S]-[ferredoxin] + 2 ATP + 2 H2O. The protein operates within porphyrin-containing compound metabolism; chlorophyll biosynthesis (light-independent). In terms of biological role, component of the dark-operative protochlorophyllide reductase (DPOR) that uses Mg-ATP and reduced ferredoxin to reduce ring D of protochlorophyllide (Pchlide) to form chlorophyllide a (Chlide). This reaction is light-independent. The NB-protein (ChlN-ChlB) is the catalytic component of the complex. In Nephroselmis olivacea (Green alga), this protein is Light-independent protochlorophyllide reductase subunit B.